The chain runs to 301 residues: MAKPLTITSSHSHFSLAWRAYFEMTKPKVVALMLLTVLVGMCLAVPTAVPVQPLIAGMFGIALMAGSAAALNHLIDRRIDGMMARTYNRPLPKGRVSAKRALIFAASIGGLGFVVLYVLVNPLTAWLTFASLIGYALVYTAYLKRATSQNIVIGGLAGAMPPLLGWTAVTNQFHGHALLLVIIIFTWTPPHFWALAIHRRAEYAKVDIPMLPVTHGVEFTKTCILLYTVLLAIACLLPVLVGMCGPMYFVCSSLLSSVFIYKAWQLKYRDRDGLAMQVFRFSIYHLMLLFMALLIDHYLWS.

Helical transmembrane passes span 29 to 49 (VVAL…PTAV), 51 to 71 (VQPL…AAAL), 101 to 121 (ALIF…VLVN), 123 to 143 (LTAW…TAYL), 150 to 170 (NIVI…TAVT), 177 to 197 (ALLL…ALAI), 223 to 243 (CILL…LVGM), 244 to 264 (CGPM…YKAW), and 281 to 301 (FSIY…YLWS).

This sequence belongs to the UbiA prenyltransferase family. Protoheme IX farnesyltransferase subfamily.

It is found in the cell inner membrane. It carries out the reaction heme b + (2E,6E)-farnesyl diphosphate + H2O = Fe(II)-heme o + diphosphate. Its pathway is porphyrin-containing compound metabolism; heme O biosynthesis; heme O from protoheme: step 1/1. Its function is as follows. Converts heme B (protoheme IX) to heme O by substitution of the vinyl group on carbon 2 of heme B porphyrin ring with a hydroxyethyl farnesyl side group. This Shewanella putrefaciens (strain CN-32 / ATCC BAA-453) protein is Protoheme IX farnesyltransferase 1.